The sequence spans 161 residues: Non-secretory ribonuclease (161 aa).

A signal peptide spans 1-27 (MVPKLFTSQICLLLLLGLLAVEGSLHV). C-linked (Man) tryptophan glycosylation is present at tryptophan 34. The active-site Proton acceptor is histidine 42. Asparagine 44 is a glycosylation site (N-linked (GlcNAc...) asparagine). 4 disulfides stabilise this stretch: cysteine 50-cysteine 110, cysteine 64-cysteine 123, cysteine 82-cysteine 138, and cysteine 89-cysteine 98. Residue tyrosine 60 is modified to 3'-nitrotyrosine. 65–69 (KNQNT) serves as a coordination point for substrate. N-linked (GlcNAc...) asparagine glycans are attached at residues asparagine 86, asparagine 92, asparagine 111, and asparagine 119. Histidine 156 serves as the catalytic Proton donor.

This sequence belongs to the pancreatic ribonuclease family. As to quaternary structure, interacts with and forms a tight 1:1 complex with RNH1. Dimerization of two such complexes may occur.

It is found in the lysosome. The protein localises to the cytoplasmic granule. It catalyses the reaction an [RNA] containing cytidine + H2O = an [RNA]-3'-cytidine-3'-phosphate + a 5'-hydroxy-ribonucleotide-3'-[RNA].. The catalysed reaction is an [RNA] containing uridine + H2O = an [RNA]-3'-uridine-3'-phosphate + a 5'-hydroxy-ribonucleotide-3'-[RNA].. Functionally, this is a non-secretory ribonuclease. It is a pyrimidine specific nuclease with a slight preference for U. Cytotoxin and helminthotoxin. Possesses a wide variety of biological activities. The sequence is that of Non-secretory ribonuclease (RNASE2) from Gorilla gorilla gorilla (Western lowland gorilla).